The following is a 152-amino-acid chain: MADVVVPTVAVPEAMPRYAMPGDAGADLTCRHDVDLAPGERAMVETGVRVALPDGYVGFVNPRSGLAARHGLSIVNAPGTIDSGYRGQINVLLVNTDPREPVHLDAGSRIAQLVVVPVVEAIFEPVEDLDDTERGQGGYGSTGVSAMPPVDG.

Substrate contacts are provided by residues 63–65 (RSG), asparagine 76, and 80–82 (TID). Positions 129-152 (LDDTERGQGGYGSTGVSAMPPVDG) are disordered.

It belongs to the dUTPase family. Mg(2+) is required as a cofactor.

The enzyme catalyses dUTP + H2O = dUMP + diphosphate + H(+). The protein operates within pyrimidine metabolism; dUMP biosynthesis; dUMP from dCTP (dUTP route): step 2/2. This enzyme is involved in nucleotide metabolism: it produces dUMP, the immediate precursor of thymidine nucleotides and it decreases the intracellular concentration of dUTP so that uracil cannot be incorporated into DNA. The protein is Deoxyuridine 5'-triphosphate nucleotidohydrolase of Cutibacterium acnes (strain DSM 16379 / KPA171202) (Propionibacterium acnes).